We begin with the raw amino-acid sequence, 69 residues long: A-kinase anchor protein inhibitor 1 (69 aa).

The interval 39-69 (QESLRREGRPGDSRAWGQLGGCELTKKHEKK) is disordered. Over residues 41-50 (SLRREGRPGD) the composition is skewed to basic and acidic residues.

Binds cAMP-dependent protein kinase (PKA). Interacts specifically with RII-regulatory subunits of PKA (PRKAR2A and PRKAR2B). As to expression, preferentially expressed in the neural tissues.

Protein kinase A (PKA)-binding protein. Binds to type II regulatory subunits of protein kinase A (PKA) and may block the A-kinase anchoring protein (AKAP)-mediated subcellular localization of PKA. This is A-kinase anchor protein inhibitor 1 from Mus musculus (Mouse).